We begin with the raw amino-acid sequence, 2909 residues long: Micronemal protein 15 (2909 aa).

An N-terminal signal peptide occupies residues 1–29; that stretch reads MVFRATREPFRLPLVAAFIALFLLKGVTC. N-linked (GlcNAc...) asparagine glycosylation is found at asparagine 512, asparagine 563, asparagine 792, asparagine 813, asparagine 986, asparagine 1007, asparagine 1057, asparagine 1142, asparagine 1319, asparagine 1395, and asparagine 1713. The TSP type-1 1 domain occupies 1755 to 1811; it reads TAIVGEWGEWSACTGTCFSQWWTPKRTRTRLVLAELSHSQIPSVSETATCLDLPPCG. Residues 1937 to 2073 are disordered; the sequence is RRKGIMSRRR…RSQARNQTPD (137 aa). Polar residues predominate over residues 1967 to 1977; that stretch reads SEQSGKASQNG. An N-linked (GlcNAc...) asparagine glycan is attached at asparagine 1976. A compositionally biased stretch (basic residues) spans 1978–1988; the sequence is SRRHRASRKQK. Positions 2004 to 2016 are enriched in polar residues; it reads GESTLHGTGTNAY. Positions 2049–2065 are enriched in basic residues; that stretch reads KARRARRGAGRFRKSRS. A glycan (N-linked (GlcNAc...) asparagine) is linked at asparagine 2333. A TSP type-1 2 domain is found at 2484–2549; sequence TCDYTEWSEW…EKCDWMPVCP (66 aa). 3 disulfide bridges follow: cysteine 2485–cysteine 2528, cysteine 2496–cysteine 2500, and cysteine 2542–cysteine 2548. The interval 2552 to 2587 is disordered; the sequence is EGEEEDDATGGVEPRGEPIVPPWSPERPTDENNQAM. N-linked (GlcNAc...) asparagine glycosylation occurs at asparagine 2706. Residues 2709-2729 traverse the membrane as a helical segment; the sequence is TWVICLLLGVGGGICFVLSCV. 3 N-linked (GlcNAc...) asparagine glycosylation sites follow: asparagine 2751, asparagine 2768, and asparagine 2793. The disordered stretch occupies residues 2759–2846; sequence ESHKLRRQGN…IGQTSPTQQR (88 aa). Positions 2801 to 2815 are enriched in acidic residues; sequence PEEEPWQFEDRDEEP. Residues 2837-2846 are compositionally biased toward polar residues; sequence IGQTSPTQQR.

As to quaternary structure, component of a complex, at least composed of cysteine repeat modular protein A (CRMPa), cysteine repeat modular protein B (CRMPb), micronemal protein 15 (MIC15) and thrombospondin type 1 domain-containing protein (TSP1).

It is found in the membrane. Its function is as follows. Required for rhoptry secretion. Plays a role in host cell invasion. The polypeptide is Micronemal protein 15 (Toxoplasma gondii).